Consider the following 223-residue polypeptide: MKFFAFSMLIGEASPIVLALRRTTLEVRQLDPIIRSELEQGSSSSCPKAILIFARGSTEIGNMGVSAGPAVASALEAYGADQIWVQGVGGPYTADLPSNFLPGGTSQSAINEAVRLFNEANTKCPSTPIVAGGYSQGTAVMAGAIPKLDAVRARVVGTVLFGYTQNQQNNKGIKDYPQEDLQVYCEVGDLVCDGTLIITVSHFLYLEEAAGPAPEFLKSKIGA.

The first 19 residues, 1 to 19 (MKFFAFSMLIGEASPIVLA), serve as a signal peptide directing secretion. A disulfide bond links Cys-46 and Cys-124. The active-site Nucleophile is Ser-135. An intrachain disulfide couples Cys-185 to Cys-192. Residue Asp-189 is part of the active site. His-202 (proton donor/acceptor) is an active-site residue.

It belongs to the cutinase family. In terms of processing, the 2 disulfide bonds play a critical role in holding the catalytic residues in juxta-position; reduction of the disulfide bridges results in the complete inactivation of the enzyme.

The protein resides in the secreted. It carries out the reaction cutin + H2O = cutin monomers.. Catalyzes the hydrolysis of complex carboxylic polyesters found in the cell wall of plants. Degrades cutin, a macromolecule that forms the structure of the plant cuticle. Allows pathogenic fungi to penetrate through the cuticular barrier into the host plant during the initial stage of fungal infection. This is Cutinase (CUT) from Didymella rabiei (Chickpea ascochyta blight fungus).